Reading from the N-terminus, the 1462-residue chain is Gag-Pol polyprotein (1462 aa).

G2 is lipidated: N-myristoyl glycine; by host. The interaction with Gp41 stretch occupies residues 7–31 (VLRGKKADELEKIRLRPGGKKKYRL). The Nuclear export signal signature appears at 16–22 (LEKIRLR). Positions 26–32 (KKKYRLK) match the Nuclear localization signal motif. The interval 191 to 228 (NCVGDHQAAMQIIREIINEEAADWDVQHPIPGPLPAGQ) is interaction with human PPIA/CYPA and NUP153. Positions 279–364 (YNPTNILDIK…GGPGQKARLM (86 aa)) are dimerization/Multimerization of capsid protein p24. 2 consecutive CCHC-type zinc fingers follow at residues 388–405 (IKCW…QCRA) and 409–426 (QGCW…NCPD). Residues 441-507 (APQLPRGPKF…RRDTTQRDDR (67 aa)) form a disordered region. The segment covering 454-468 (NTNSTPNGSSSGPTG) has biased composition (low complexity). Basic and acidic residues-rich tracts occupy residues 471–490 (HAAR…RSDR) and 497–507 (ARRDTTQRDDR). The dimerization of protease stretch occupies residues 512-516 (PQFSL). The region spanning 531-600 (VEVLLDTGAD…TPINIFGRNI (70 aa)) is the Peptidase A2 domain. The active-site For protease activity; shared with dimeric partner is D536. 2 dimerization of protease regions span residues 560-566 (GIGGFIN) and 599-611 (NILT…LNLP). The 191-residue stretch at 654-844 (EGQLEEAPPT…PPYQWMGYEL (191 aa)) folds into the Reverse transcriptase domain. Residues D720, D795, and D796 each coordinate Mg(2+). The tract at residues 837–845 (YQWMGYELW) is RT 'primer grip'. The Tryptophan repeat motif motif lies at 1007 to 1023 (WEQWWDNYWQVTWIPDW). The RNase H type-1 domain occupies 1043–1166 (IPGAETFYTD…IDHLVSQGIR (124 aa)). 4 residues coordinate Mg(2+): D1052, E1087, D1107, and D1158. An Integrase-type zinc finger spans residues 1172-1213 (ERIEPAQEEHGKYHSNVKELAHKFGLPNLVARQIVNTCAQCQ). H1181, H1185, C1209, and C1212 together coordinate Zn(2+). Residues 1222–1373 (QVNAELGTWQ…TPVERLVNMI (152 aa)) form the Integrase catalytic domain. D1233, D1285, and E1321 together coordinate Mg(2+). Residues 1392 to 1439 (FRVYFREGRNQLWQGPGELLWKGDGAVIVKVGTDIKVIPRRKAKIIRD) constitute a DNA-binding region (integrase-type). The segment at 1443–1462 (RQEMDSGSHLEGAREDGEMA) is disordered.

As to quaternary structure, homotrimer; further assembles as hexamers of trimers. Interacts with gp41 (via C-terminus). Interacts with host CALM1; this interaction induces a conformational change in the Matrix protein, triggering exposure of the myristate group. Interacts with host AP3D1; this interaction allows the polyprotein trafficking to multivesicular bodies during virus assembly. Part of the pre-integration complex (PIC) which is composed of viral genome, matrix protein, Vpr and integrase. Homodimer; the homodimer further multimerizes as homohexamers or homopentamers. Interacts with human PPIA/CYPA. Interacts with human NUP153. Interacts with host PDZD8; this interaction stabilizes the capsid. Interacts with monkey TRIM5; this interaction destabilizes the capsid. In terms of assembly, homodimer, whose active site consists of two apposed aspartic acid residues. As to quaternary structure, heterodimer of p66 RT and p51 RT (RT p66/p51). Heterodimerization of RT is essential for DNA polymerase activity. The overall folding of the subdomains is similar in p66 RT and p51 RT but the spatial arrangements of the subdomains are dramatically different. Homotetramer; may further associate as a homohexadecamer. Part of the pre-integration complex (PIC) which is composed of viral genome, matrix protein, Vpr and integrase. Interacts with human SMARCB1/INI1 and human PSIP1/LEDGF isoform 1. Interacts with human KPNA3; this interaction might play a role in nuclear import of the pre-integration complex. Interacts with human NUP153; this interaction might play a role in nuclear import of the pre-integration complex. The cofactor is Mg(2+). In terms of processing, specific enzymatic cleavages by the viral protease yield mature proteins. The protease is released by autocatalytic cleavage. The polyprotein is cleaved during and after budding, this process is termed maturation. Proteolytic cleavage of p66 RT removes the RNase H domain to yield the p51 RT subunit. Nucleocapsid protein p7 might be further cleaved after virus entry.

It localises to the host cell membrane. Its subcellular location is the host endosome. It is found in the host multivesicular body. The protein resides in the virion membrane. The protein localises to the host nucleus. It localises to the host cytoplasm. Its subcellular location is the virion. The enzyme catalyses Endopeptidase for which the P1 residue is preferably hydrophobic.. It carries out the reaction Endohydrolysis of RNA in RNA/DNA hybrids. Three different cleavage modes: 1. sequence-specific internal cleavage of RNA. Human immunodeficiency virus type 1 and Moloney murine leukemia virus enzymes prefer to cleave the RNA strand one nucleotide away from the RNA-DNA junction. 2. RNA 5'-end directed cleavage 13-19 nucleotides from the RNA end. 3. DNA 3'-end directed cleavage 15-20 nucleotides away from the primer terminus.. It catalyses the reaction 3'-end directed exonucleolytic cleavage of viral RNA-DNA hybrid.. The catalysed reaction is DNA(n) + a 2'-deoxyribonucleoside 5'-triphosphate = DNA(n+1) + diphosphate. With respect to regulation, protease: The viral protease is inhibited by many synthetic protease inhibitors (PIs), such as amprenavir, atazanavir, indinavir, loprinavir, nelfinavir, ritonavir and saquinavir. Use of protease inhibitors in tritherapy regimens permit more ambitious therapeutic strategies. Reverse transcriptase/ribonuclease H: RT can be inhibited either by nucleoside RT inhibitors (NRTIs) or by non nucleoside RT inhibitors (NNRTIs). NRTIs act as chain terminators, whereas NNRTIs inhibit DNA polymerization by binding a small hydrophobic pocket near the RT active site and inducing an allosteric change in this region. Classical NRTIs are abacavir, adefovir (PMEA), didanosine (ddI), lamivudine (3TC), stavudine (d4T), tenofovir (PMPA), zalcitabine (ddC), and zidovudine (AZT). Classical NNRTIs are atevirdine (BHAP U-87201E), delavirdine, efavirenz (DMP-266), emivirine (I-EBU), and nevirapine (BI-RG-587). The tritherapies used as a basic effective treatment of AIDS associate two NRTIs and one NNRTI. Its function is as follows. Mediates, with Gag polyprotein, the essential events in virion assembly, including binding the plasma membrane, making the protein-protein interactions necessary to create spherical particles, recruiting the viral Env proteins, and packaging the genomic RNA via direct interactions with the RNA packaging sequence (Psi). Gag-Pol polyprotein may regulate its own translation, by the binding genomic RNA in the 5'-UTR. At low concentration, the polyprotein would promote translation, whereas at high concentration, the polyprotein would encapsidate genomic RNA and then shut off translation. Targets the polyprotein to the plasma membrane via a multipartite membrane-binding signal, that includes its myristoylated N-terminus. Matrix protein is part of the pre-integration complex. Implicated in the release from host cell mediated by Vpu. Binds to RNA. In terms of biological role, forms the conical core that encapsulates the genomic RNA-nucleocapsid complex in the virion. Most core are conical, with only 7% tubular. The core is constituted by capsid protein hexamer subunits. The core is disassembled soon after virion entry. Host restriction factors such as TRIM5-alpha or TRIMCyp bind retroviral capsids and cause premature capsid disassembly, leading to blocks in reverse transcription. Capsid restriction by TRIM5 is one of the factors which restricts HIV-1 to the human species. Host PIN1 apparently facilitates the virion uncoating. On the other hand, interactions with PDZD8 or CYPA stabilize the capsid. Functionally, encapsulates and protects viral dimeric unspliced genomic RNA (gRNA). Binds these RNAs through its zinc fingers. Acts as a nucleic acid chaperone which is involved in rearangement of nucleic acid secondary structure during gRNA retrotranscription. Also facilitates template switch leading to recombination. As part of the polyprotein, participates in gRNA dimerization, packaging, tRNA incorporation and virion assembly. Its function is as follows. Aspartyl protease that mediates proteolytic cleavages of Gag and Gag-Pol polyproteins during or shortly after the release of the virion from the plasma membrane. Cleavages take place as an ordered, step-wise cascade to yield mature proteins. This process is called maturation. Displays maximal activity during the budding process just prior to particle release from the cell. Also cleaves Nef and Vif, probably concomitantly with viral structural proteins on maturation of virus particles. Hydrolyzes host EIF4GI and PABP1 in order to shut off the capped cellular mRNA translation. The resulting inhibition of cellular protein synthesis serves to ensure maximal viral gene expression and to evade host immune response. Multifunctional enzyme that converts the viral RNA genome into dsDNA in the cytoplasm, shortly after virus entry into the cell. This enzyme displays a DNA polymerase activity that can copy either DNA or RNA templates, and a ribonuclease H (RNase H) activity that cleaves the RNA strand of RNA-DNA heteroduplexes in a partially processive 3' to 5' endonucleasic mode. Conversion of viral genomic RNA into dsDNA requires many steps. A tRNA(3)-Lys binds to the primer-binding site (PBS) situated at the 5'-end of the viral RNA. RT uses the 3' end of the tRNA primer to perform a short round of RNA-dependent minus-strand DNA synthesis. The reading proceeds through the U5 region and ends after the repeated (R) region which is present at both ends of viral RNA. The portion of the RNA-DNA heteroduplex is digested by the RNase H, resulting in a ssDNA product attached to the tRNA primer. This ssDNA/tRNA hybridizes with the identical R region situated at the 3' end of viral RNA. This template exchange, known as minus-strand DNA strong stop transfer, can be either intra- or intermolecular. RT uses the 3' end of this newly synthesized short ssDNA to perform the RNA-dependent minus-strand DNA synthesis of the whole template. RNase H digests the RNA template except for two polypurine tracts (PPTs) situated at the 5'-end and near the center of the genome. It is not clear if both polymerase and RNase H activities are simultaneous. RNase H probably can proceed both in a polymerase-dependent (RNA cut into small fragments by the same RT performing DNA synthesis) and a polymerase-independent mode (cleavage of remaining RNA fragments by free RTs). Secondly, RT performs DNA-directed plus-strand DNA synthesis using the PPTs that have not been removed by RNase H as primers. PPTs and tRNA primers are then removed by RNase H. The 3' and 5' ssDNA PBS regions hybridize to form a circular dsDNA intermediate. Strand displacement synthesis by RT to the PBS and PPT ends produces a blunt ended, linear dsDNA copy of the viral genome that includes long terminal repeats (LTRs) at both ends. In terms of biological role, catalyzes viral DNA integration into the host chromosome, by performing a series of DNA cutting and joining reactions. This enzyme activity takes place after virion entry into a cell and reverse transcription of the RNA genome in dsDNA. The first step in the integration process is 3' processing. This step requires a complex comprising the viral genome, matrix protein, Vpr and integrase. This complex is called the pre-integration complex (PIC). The integrase protein removes 2 nucleotides from each 3' end of the viral DNA, leaving recessed CA OH's at the 3' ends. In the second step, the PIC enters cell nucleus. This process is mediated through integrase and Vpr proteins, and allows the virus to infect a non dividing cell. This ability to enter the nucleus is specific of lentiviruses, other retroviruses cannot and rely on cell division to access cell chromosomes. In the third step, termed strand transfer, the integrase protein joins the previously processed 3' ends to the 5' ends of strands of target cellular DNA at the site of integration. The 5'-ends are produced by integrase-catalyzed staggered cuts, 5 bp apart. A Y-shaped, gapped, recombination intermediate results, with the 5'-ends of the viral DNA strands and the 3' ends of target DNA strands remaining unjoined, flanking a gap of 5 bp. The last step is viral DNA integration into host chromosome. This involves host DNA repair synthesis in which the 5 bp gaps between the unjoined strands are filled in and then ligated. Since this process occurs at both cuts flanking the HIV genome, a 5 bp duplication of host DNA is produced at the ends of HIV-1 integration. Alternatively, Integrase may catalyze the excision of viral DNA just after strand transfer, this is termed disintegration. In Human immunodeficiency virus type 2 subtype A (isolate SBLISY) (HIV-2), this protein is Gag-Pol polyprotein (gag-pol).